The sequence spans 834 residues: MQQQYNPSAIEPKVQQFWAENKVFKAVKDVTKEKYYCLSMLPYPSGKLHMGHVRNYTIGDVVSRYQRMIGKNVLQPMGWDAFGLPAEGAAVKNNTAPAKWTYENIEYMKGQLKMLGFSYDWDREVTTCRQEYYKWEQWFFTELYKKGLVYKKTSTVNWCPNDATVLANEQVHEGCCWRCDTPVEQREIPQWFIKITDYAEELLTHLDNLPQWPDQVKTMQRNWIGRSEGVEITFKIAGSNAELPVYTTRPDTFFGVSYVAIAAAHPLAEMAAENNPALAEFIREAKNTKVAEAELATMEKKGMATGLFAIHPLTGKEVPVWVANFVLMHYGTGAVMAVPAHDERDFEFAQKYGLQINQVIQPLDGSEWDFSKAAYTEHGKLINSAEFDDLNFEQAFNAIADKLESMKVGKRQVNFRLRDWGVSRQRYWGAPIPMMTTEDGEVVTVPMQDLPVILPEDVVMNGVQSPIKADPEWAKTTYNGKPALKETDTFDTFMESSWYYARYTCPQYHEGMLDSDEANYWLPVDQYIGGIEHATMHLLYFRFFHKLLRDAGILNSDEPATKLLCQGMVLADAFYYTSPTNERIWVSPTQVTLERDEKGRIIKATDPEGRELVHSGMTKMSKSKNNGIDPQEMVEKYGADTVRLFMMFASPAEMTLEWQESGVEGAKRFLGRVWNLVYEYSQNPATAALDVAALSKAQKELRRDVHKTIAKVSDDIGRRQTFNTAIAAIMELMNKLTKAPLENEQDKAVMAEALSAVVRMLYPITPHICFELWQALGNNDTIDFAPWVVADESAMVEDEKLVVVQVNGKVRVKLPFRQQQPKMKSKQLRKRMQT.

The 'HIGH' region motif lies at 42-52; sequence PYPSGKLHMGH. The 'KMSKS' region signature appears at 619–623; the sequence is KMSKS. Lys-622 contributes to the ATP binding site.

Belongs to the class-I aminoacyl-tRNA synthetase family.

It localises to the cytoplasm. It catalyses the reaction tRNA(Leu) + L-leucine + ATP = L-leucyl-tRNA(Leu) + AMP + diphosphate. The sequence is that of Leucine--tRNA ligase from Actinobacillus pleuropneumoniae serotype 7 (strain AP76).